Reading from the N-terminus, the 336-residue chain is Anthranilate phosphoribosyltransferase (336 aa).

Residues G78, 81 to 82 (GD), T86, 88 to 91 (NVST), 106 to 114 (KHGNYSVSS), and S118 contribute to the 5-phospho-alpha-D-ribose 1-diphosphate site. G78 provides a ligand contact to anthranilate. S90 contributes to the Mg(2+) binding site. N109 lines the anthranilate pocket. Residue R164 coordinates anthranilate. Residues D222 and E223 each contribute to the Mg(2+) site.

It belongs to the anthranilate phosphoribosyltransferase family. Homodimer. Requires Mg(2+) as cofactor.

The enzyme catalyses N-(5-phospho-beta-D-ribosyl)anthranilate + diphosphate = 5-phospho-alpha-D-ribose 1-diphosphate + anthranilate. It functions in the pathway amino-acid biosynthesis; L-tryptophan biosynthesis; L-tryptophan from chorismate: step 2/5. Functionally, catalyzes the transfer of the phosphoribosyl group of 5-phosphorylribose-1-pyrophosphate (PRPP) to anthranilate to yield N-(5'-phosphoribosyl)-anthranilate (PRA). The protein is Anthranilate phosphoribosyltransferase of Halobacterium salinarum (strain ATCC 29341 / DSM 671 / R1).